The chain runs to 431 residues: 3-deoxy-D-manno-octulosonic acid transferase (431 aa).

A helical; Signal-anchor membrane pass occupies residues 5-27 (WLTSRLYDAFLVCAFFVSAPRIF). Residue Glu67 is the Proton acceptor of the active site. CMP contacts are provided by residues 275–276 (PR), 315–317 (MGV), and 342–345 (NLLE).

Belongs to the glycosyltransferase group 1 family. Glycosyltransferase 30 subfamily.

Its subcellular location is the cell inner membrane. The enzyme catalyses lipid IVA (E. coli) + CMP-3-deoxy-beta-D-manno-octulosonate = alpha-Kdo-(2-&gt;6)-lipid IVA (E. coli) + CMP + H(+). It catalyses the reaction alpha-Kdo-(2-&gt;6)-lipid IVA (E. coli) + CMP-3-deoxy-beta-D-manno-octulosonate = alpha-Kdo-(2-&gt;4)-alpha-Kdo-(2-&gt;6)-lipid IVA (E. coli) + CMP + H(+). It carries out the reaction alpha-Kdo-(2-&gt;4)-alpha-Kdo-(2-&gt;6)-lipid IVA (E. coli) + CMP-3-deoxy-beta-D-manno-octulosonate = alpha-Kdo-(2-&gt;8)-alpha-Kdo-(2-&gt;4)-alpha-Kdo-(2-&gt;6)-lipid IVA (E. coli) + CMP + H(+). Its pathway is bacterial outer membrane biogenesis; LPS core biosynthesis. Involved in lipopolysaccharide (LPS) biosynthesis. Catalyzes the transfer of three 3-deoxy-D-manno-octulosonate (Kdo) residues from CMP-Kdo to lipid IV(A), the tetraacyldisaccharide-1,4'-bisphosphate precursor of lipid A. Thus generates the genus-specific LPS epitope of Chlamydia, composed of the trisaccharide alpha-Kdo-(2-&gt;8)-alpha-Kdo-(2-&gt;4)-alpha-Kdo. In Chlamydia trachomatis serovar D (strain ATCC VR-885 / DSM 19411 / UW-3/Cx), this protein is 3-deoxy-D-manno-octulosonic acid transferase (waaA).